Consider the following 105-residue polypeptide: Guanyl-specific ribonuclease Ms (105 aa).

Cystine bridges form between Cys-3-Cys-11 and Cys-7-Cys-102. His-39 is an active-site residue. Glu-57 (proton acceptor) is an active-site residue. His-91 (proton donor) is an active-site residue.

It belongs to the ribonuclease N1/T1 family.

The enzyme catalyses [RNA] containing guanosine + H2O = an [RNA fragment]-3'-guanosine-3'-phosphate + a 5'-hydroxy-ribonucleotide-3'-[RNA fragment].. This chain is Guanyl-specific ribonuclease Ms, found in Aspergillus phoenicis (Aspergillus saitoi).